An 894-amino-acid polypeptide reads, in one-letter code: MRPMRIFVNDDRHVMAKHSSVYPTQEELEAVQNMVSHTERALKAVSDWIDEQEKGSSEQAESDNMDVPPEDDSKEGAGEQKTEHMTRTLRGVMRVGLVAKGLLLKGDLDLELVLLCKEKPTTALLDKVADNLAIQLAAVTEDKYEILQSVDDAAIVIKNTKEPPLSLTIHLTSPVVREEMEKVLAGETLSVNDPPDVLDRQKCLAALASLRHAKWFQARANGLKSCVIVIRVLRDLCTRVPTWGPLRGWPLELLCEKSIGTANRPMGAGEALRRVLECLASGIVMPDGSGIYDPCEKEATDAIGHLDRQQREDITQSAQHALRLAAFGQLHKVLGMDPLPSKMPKKPKNENPVDYTVQIPPSTTYAITPMKRPMEEDGEEKSPSKKKKKIQKKEEKAEPPQAMNALMRLNQLKPGLQYKLVSQTGPVHAPIFTMSVEVDGNSFEASGPSKKTAKLHVAVKVLQDMGLPTGAEGRDSSKGEDSAEETEAKPAVVAPAPVVEAVSTPSAAFPSDATAEQGPILTKHGKNPVMELNEKRRGLKYELISETGGSHDKRFVMEVEVDGQKFQGAGSNKKVAKAYAALAALEKLFPDTPLALDANKKKRAPVPVRGGPKFAAKPHNPGFGMGGPMHNEVPPPPNLRGRGRGGSIRGRGRGRGFGGANHGGYMNAGAGYGSYGYGGNSATAGYSQFYSNGGHSGNASGGGGGGGGGSSGYGSYYQGDNYNSPVPPKHAGKKQPHGGQQKPSYGSGYQSHQGQQQSYNQSPYSNYGPPQGKQKGYNHGQGSYSYSNSYNSPGGGGGSDYNYESKFNYSGSGGRSGGNSYGSGGASYNPGSHGGYGGGSGGGSSYQGKQGGYSQSNYNSPGSGQNYSGPPSSYQSSQGGYGRNADHSMNYQYR.

Residues 5-378 (RIFVNDDRHV…PMKRPMEEDG (374 aa)) form the DZF domain. The tract at residues 50-86 (DEQEKGSSEQAESDNMDVPPEDDSKEGAGEQKTEHMT) is disordered. The segment covering 60–73 (AESDNMDVPPEDDS) has biased composition (acidic residues). Position 62 is a phosphoserine (S62). The segment covering 74-86 (KEGAGEQKTEHMT) has biased composition (basic and acidic residues). K100 carries the N6-acetyllysine modification. Position 188 is a phosphothreonine; by PKR (T188). S190 carries the phosphoserine modification. A Glycyl lysine isopeptide (Lys-Gly) (interchain with G-Cter in ubiquitin) cross-link involves residue K297. Residue T315 is modified to Phosphothreonine; by PKR. Residue K348 forms a Glycyl lysine isopeptide (Lys-Gly) (interchain with G-Cter in SUMO1) linkage. The disordered stretch occupies residues 363-401 (TTYAITPMKRPMEEDGEEKSPSKKKKKIQKKEEKAEPPQ). Positions 371–389 (KRPMEEDGEEKSPSKKKKK) match the Bipartite nuclear localization signal motif. The span at 372-383 (RPMEEDGEEKSP) shows a compositional bias: basic and acidic residues. Phosphoserine is present on residues S382 and S384. A Glycyl lysine isopeptide (Lys-Gly) (interchain with G-Cter in SUMO2) cross-link involves residue K396. In terms of domain architecture, DRBM 1 spans 398 to 467 (EPPQAMNALM…AVKVLQDMGL (70 aa)). Residue K460 is modified to N6-acetyllysine. Residues 466 to 524 (GLPTGAEGRDSSKGEDSAEETEAKPAVVAPAPVVEAVSTPSAAFPSDATAEQGPILTKH) are disordered. Positions 472 to 481 (EGRDSSKGED) are enriched in basic and acidic residues. Phosphoserine is present on residues S476, S477, and S482. K489 is covalently cross-linked (Glycyl lysine isopeptide (Lys-Gly) (interchain with G-Cter in SUMO2)). Low complexity predominate over residues 489–508 (KPAVVAPAPVVEAVSTPSAA). A DRBM 2 domain is found at 524–590 (HGKNPVMELN…ALAALEKLFP (67 aa)). T592 carries the post-translational modification Phosphothreonine. Residues 609–894 (RGGPKFAAKP…ADHSMNYQYR (286 aa)) are interaction with PRMT1. Disordered regions lie at residues 625-660 (MGGPMHNEVPPPPNLRGRGRGGSIRGRGRGRGFGGA) and 718-894 (QGDN…YQYR). Gly residues predominate over residues 644–660 (RGGSIRGRGRGRGFGGA). Low complexity-rich tracts occupy residues 743 to 770 (PSYGSGYQSHQGQQQSYNQSPYSNYGPP) and 777 to 792 (YNHGQGSYSYSNSYNS). Residues S792, S810, S812, and S816 each carry the phosphoserine modification. Composition is skewed to gly residues over residues 811-825 (GSGGRSGGNSYGSGG) and 832-851 (SHGGYGGGSGGGSSYQGKQG). The segment covering 857 to 866 (NYNSPGSGQN) has biased composition (polar residues). The span at 867–878 (YSGPPSSYQSSQ) shows a compositional bias: low complexity.

Identified in a IGF2BP1-dependent mRNP granule complex containing untranslated mRNAs. Interacts with FUS and SMN. Interacts (via C-terminus) with PRMT1. Forms a complex with ILF2. Can also bind to PRKDC/XRCC7: this may stabilize the interaction of PRKDC/XRCC7 and the heterodimeric complex of XRCC6/KU70 and XRCC5/KU80. Forms a heteromeric complex with ZNF346 and ILF3. Found in a nuclear export complex with XPO5, ILF3, Ran and double-stranded RNA or double-stranded minihelix VA1 RNA. Found in a nuclear export complex with XPO5, RAN, ILF3, ZNF346 and double-stranded RNA. Interacts with XPO5 and ZNF346. Forms a complex with ILF2, YLPM1, KHDRBS1, RBMX, NCOA5 and PPP1CA. Interacts with AGO1 and AGO2. Interacts with DHX36; this interaction occurs in a RNA-dependent manner. Interacts with ELAVL1; this interaction occurs in a RNA-dependent manner. Interacts with HAVCR2; this interaction promotes ILF3 ubiquitination and subsequent degradation. In terms of processing, phosphorylated at Thr-188 and Thr-315 by PKR in response to certain RNA viruses. This phosphorylation results in the dissociation of ILF2 from the ILF2-ILF3 complex resulting in a cytoplasmic sequestration of ILF3 where it can bind to viral RNAs and impede viral replication. Post-translationally, methylated by protein arginine N-methyltransferase 1. Ubiquitinated at Lys-297 in a TRIM47-dependent manner; this 'Lys-48'-linked ubiquitination promotes ILF3 degradation. Ubiquitous.

The protein resides in the nucleus. It localises to the nucleolus. It is found in the cytoplasm. In terms of biological role, RNA-binding protein that plays an essential role in the biogenesis of circular RNAs (circRNAs) which are produced by back-splicing circularization of pre-mRNAs. Within the nucleus, promotes circRNAs processing by stabilizing the regulatory elements residing in the flanking introns of the circularized exons. Plays thereby a role in the back-splicing of a subset of circRNAs. As a consequence, participates in a wide range of transcriptional and post-transcriptional processes. Binds to poly-U elements and AU-rich elements (AREs) in the 3'-UTR of target mRNAs. Upon viral infection, ILF3 accumulates in the cytoplasm and participates in the innate antiviral response. Mechanistically, ILF3 becomes phosphorylated and activated by the double-stranded RNA-activated protein kinase/PKR which releases ILF3 from cellular mature circRNAs. In turn, unbound ILF3 molecules are able to interact with and thus inhibit viral mRNAs. Functionally, (Microbial infection) Plays a positive role in HIV-1 virus production by binding to and thereby stabilizing HIV-1 RNA, together with ILF3. The chain is Interleukin enhancer-binding factor 3 (ILF3) from Homo sapiens (Human).